A 74-amino-acid chain; its full sequence is uncharacterized protein (74 aa).

This is an uncharacterized protein from Invertebrate iridescent virus 3 (IIV-3).